Reading from the N-terminus, the 135-residue chain is Ribosome-binding factor A (135 aa).

It belongs to the RbfA family. Monomer. Binds 30S ribosomal subunits, but not 50S ribosomal subunits or 70S ribosomes.

The protein localises to the cytoplasm. One of several proteins that assist in the late maturation steps of the functional core of the 30S ribosomal subunit. Associates with free 30S ribosomal subunits (but not with 30S subunits that are part of 70S ribosomes or polysomes). Required for efficient processing of 16S rRNA. May interact with the 5'-terminal helix region of 16S rRNA. This chain is Ribosome-binding factor A, found in Bartonella tribocorum (strain CIP 105476 / IBS 506).